The primary structure comprises 131 residues: Cilia- and flagella-associated protein 144 (131 aa).

Residues 79 to 99 (TKKYSEPQTESQEIGWNTTPL) are disordered. A compositionally biased stretch (polar residues) spans 84-99 (EPQTESQEIGWNTTPL).

The protein belongs to the CFAP144 family. In terms of tissue distribution, expressed in choroid plexus (at protein level). Expressed by motile ciliated cells in choroid plexus.

It localises to the cytoplasm. The protein localises to the cytoskeleton. It is found in the cilium axoneme. The protein resides in the flagellum axoneme. Its function is as follows. Microtubule inner protein (MIP) part of the dynein-decorated doublet microtubules (DMTs) in cilia axoneme, which is required for motile cilia beating. This is Cilia- and flagella-associated protein 144 (CFAP144) from Gallus gallus (Chicken).